The sequence spans 27 residues: uncharacterized protein (27 aa).

The protein localises to the plastid. The protein resides in the chloroplast. This is an uncharacterized protein from Anthoceros angustus (Hornwort).